Consider the following 186-residue polypeptide: Elongation factor P (186 aa).

The protein belongs to the elongation factor P family.

The protein localises to the cytoplasm. It functions in the pathway protein biosynthesis; polypeptide chain elongation. In terms of biological role, involved in peptide bond synthesis. Stimulates efficient translation and peptide-bond synthesis on native or reconstituted 70S ribosomes in vitro. Probably functions indirectly by altering the affinity of the ribosome for aminoacyl-tRNA, thus increasing their reactivity as acceptors for peptidyl transferase. In Prochlorococcus marinus (strain SARG / CCMP1375 / SS120), this protein is Elongation factor P.